The following is a 143-amino-acid chain: Histone H2B.2, sperm (143 aa).

Positions 1–49 are disordered; that stretch reads MPKSPSKSSPRKGSPRKGSPRKGSPKRGGKGAKRAGKGGRRNVVKRRRR. 5 consecutive short sequence motifs (SPKK motif) follow at residues 4–7, 9–12, 14–17, 19–22, and 24–27; these read SPSK, SPRK, and SPKR. A compositionally biased stretch (basic residues) spans 9–49; it reads SPRKGSPRKGSPRKGSPKRGGKGAKRAGKGGRRNVVKRRRR. Phosphoserine occurs at positions 14, 19, and 24. The O-linked (GlcNAc) serine glycan is linked to serine 129. Residue lysine 137 forms a Glycyl lysine isopeptide (Lys-Gly) (interchain with G-Cter in ubiquitin) linkage.

It belongs to the histone H2B family. As to quaternary structure, the nucleosome is a histone octamer containing two molecules each of H2A, H2B, H3 and H4 assembled in one H3-H4 heterotetramer and two H2A-H2B heterodimers. The octamer wraps approximately 147 bp of DNA. Post-translationally, monoubiquitination of Lys-137 gives a specific tag for epigenetic transcriptional activation and is also prerequisite for histone H3 'Lys-4' and 'Lys-79' methylation. In terms of processing, phosphorylated on SPKK motifs 3, 4 and 5; which may regulate DNA binding. Dephosphorylated during maturation of spermatids to mature sperm and rephosphorylated at fertilization. GlcNAcylation at Ser-129 promotes monoubiquitination of Lys-137. It fluctuates in response to extracellular glucose, and associates with transcribed genes.

The protein resides in the nucleus. Its subcellular location is the chromosome. Core component of nucleosome. Nucleosomes wrap and compact DNA into chromatin, limiting DNA accessibility to the cellular machineries which require DNA as a template. Histones thereby play a central role in transcription regulation, DNA repair, DNA replication and chromosomal stability. DNA accessibility is regulated via a complex set of post-translational modifications of histones, also called histone code, and nucleosome remodeling. The sequence is that of Histone H2B.2, sperm from Psammechinus miliaris (Green sea urchin).